The primary structure comprises 533 residues: Calcium uptake protein 1 homolog, mitochondrial (533 aa).

Residues 1-13 (MLRHNFRSSIFIR) constitute a mitochondrion transit peptide. Residues 127 to 147 (PFRPEASQKEESTDSGTEIEV) form a disordered region. EF-hand domains follow at residues 270 to 305 (TSHADFALAFKIFDVDGNGALDKEEFTKVQQLIMSQ), 337 to 358 (KDGKGSLSSEKFIEFQERLQHD), and 465 to 500 (LSDHVVDVVITLFDDNLDGKLSHEEMVAVMRRRMRR). The Ca(2+) site is built by Asp-283, Asp-285, Asn-287, and Glu-294.

It belongs to the MICU1 family. MICU1 subfamily.

Its subcellular location is the mitochondrion intermembrane space. It localises to the mitochondrion inner membrane. In terms of biological role, calcium sensor of the mitochondrial calcium uniporter (mcu-1) channel, which senses calcium level via its EF-hand domains. At low calcium levels, micu-1 occludes the pore of the mcu-1 channel, preventing mitochondrial calcium uptake. At higher calcium levels, calcium-binding to micu-1 induces a conformational change that weakens mcu-1-micu-1 interactions and moves micu-1 away from the pore, allowing calcium permeation through the mcu-1 channel. Also required to protect against manganese toxicity by preventing manganese uptake by mcu-1. Modulates the activity of the mitochondrial calcium uniporter protein mcu-1 depending on the level of intracellular calcium in PLM touch receptor neurons following axonal injury. This is Calcium uptake protein 1 homolog, mitochondrial from Caenorhabditis briggsae.